A 191-amino-acid chain; its full sequence is uncharacterized protein (191 aa).

The tract at residues asparagine 52–asparagine 112 is disordered. A compositionally biased stretch (polar residues) spans glutamine 57–valine 70. The span at aspartate 71–asparagine 94 shows a compositional bias: low complexity. Residues glutamine 138 to serine 172 adopt a coiled-coil conformation.

This is an uncharacterized protein from Acanthamoeba polyphaga mimivirus (APMV).